Consider the following 976-residue polypeptide: Probable alanine--tRNA ligase, chloroplastic/mitochondrial (976 aa).

The transit peptide at Met1 to Thr54 directs the protein to the chloroplast and mitochondrion. Positions Leu71–Gly95 are disordered. A compositionally biased stretch (polar residues) spans Thr73–Asn85.

It belongs to the class-II aminoacyl-tRNA synthetase family. Monomer. The cofactor is Zn(2+).

Its subcellular location is the plastid. The protein resides in the chloroplast. It is found in the mitochondrion. The enzyme catalyses tRNA(Ala) + L-alanine + ATP = L-alanyl-tRNA(Ala) + AMP + diphosphate. Catalyzes the attachment of alanine to tRNA(Ala) in a two-step reaction: alanine is first activated by ATP to form Ala-AMP and then transferred to the acceptor end of tRNA(Ala). Also edits incorrectly charged tRNA(Ala) via its editing domain. The chain is Probable alanine--tRNA ligase, chloroplastic/mitochondrial from Ostreococcus tauri.